Reading from the N-terminus, the 333-residue chain is Phosphate acyltransferase (333 aa).

This sequence belongs to the PlsX family. Homodimer. Probably interacts with PlsY.

It is found in the cytoplasm. The enzyme catalyses a fatty acyl-[ACP] + phosphate = an acyl phosphate + holo-[ACP]. Its pathway is lipid metabolism; phospholipid metabolism. Its function is as follows. Catalyzes the reversible formation of acyl-phosphate (acyl-PO(4)) from acyl-[acyl-carrier-protein] (acyl-ACP). This enzyme utilizes acyl-ACP as fatty acyl donor, but not acyl-CoA. In Enterococcus faecalis (strain ATCC 700802 / V583), this protein is Phosphate acyltransferase.